Here is a 168-residue protein sequence, read N- to C-terminus: uncharacterized protein (168 aa).

Positions 1–21 (MVYEVLAVVSGGLLGFGVTWA) are cleaved as a signal peptide.

This is an uncharacterized protein from Archaeoglobus fulgidus (strain ATCC 49558 / DSM 4304 / JCM 9628 / NBRC 100126 / VC-16).